Consider the following 181-residue polypeptide: Nedd8-conjugating enzyme UbcE2M (181 aa).

Interaction with Uba3 regions lie at residues 4-7 (LFTL) and 24-54 (ASAA…PNDL). Residues 26-170 (AAQLRIQKDI…VKKAMRGGCV (145 aa)) enclose the UBC core domain. Cys-108 functions as the Glycyl thioester intermediate in the catalytic mechanism.

This sequence belongs to the ubiquitin-conjugating enzyme family. UBC12 subfamily. Interacts with Uba3. In terms of tissue distribution, expressed in the wing disk.

The catalysed reaction is [E1 NEDD8-activating enzyme]-S-[NEDD8 protein]-yl-L-cysteine + [E2 NEDD8-conjugating enzyme]-L-cysteine = [E1 NEDD8-activating enzyme]-L-cysteine + [E2 NEDD8-conjugating enzyme]-S-[NEDD8-protein]-yl-L-cysteine.. It participates in protein modification; protein neddylation. Its function is as follows. Accepts the ubiquitin-like protein Nedd8 from the Uba3-APP-BP1 E1 complex and catalyzes its covalent attachment to other proteins. Required for Cul1 and Cul3 neddylation. Negatively regulates full-length ci stability and hedgehog signaling. In Drosophila melanogaster (Fruit fly), this protein is Nedd8-conjugating enzyme UbcE2M.